A 377-amino-acid polypeptide reads, in one-letter code: Guanine nucleotide-binding protein subunit beta-2 (377 aa).

WD repeat units follow at residues 63–93 (GHTG…IVWN), 105–135 (LPCA…SIFN), 154–185 (GHKG…VLWD), 202–233 (GHTA…RLWD), 246–276 (GHEG…RLFD), 293–323 (GDIP…YVWD), and 339–369 (SHEG…KIWA).

It belongs to the WD repeat G protein beta family. As to quaternary structure, g proteins are composed of 3 units, alpha, beta and gamma.

Its function is as follows. Guanine nucleotide-binding proteins (G proteins) are involved as a modulator or transducer in various transmembrane signaling systems. The beta and gamma chains are required for the GTPase activity, for replacement of GDP by GTP, and for G protein-effector interaction. The sequence is that of Guanine nucleotide-binding protein subunit beta-2 from Nicotiana tabacum (Common tobacco).